Reading from the N-terminus, the 229-residue chain is Large ribosomal subunit protein uL1 (229 aa).

This sequence belongs to the universal ribosomal protein uL1 family. In terms of assembly, part of the 50S ribosomal subunit.

Functionally, binds directly to 23S rRNA. The L1 stalk is quite mobile in the ribosome, and is involved in E site tRNA release. In terms of biological role, protein L1 is also a translational repressor protein, it controls the translation of the L11 operon by binding to its mRNA. The polypeptide is Large ribosomal subunit protein uL1 (Clostridium botulinum (strain ATCC 19397 / Type A)).